Consider the following 348-residue polypeptide: UPF0324 membrane protein BH02290 (348 aa).

11 consecutive transmembrane segments (helical) span residues 13 to 35 (AFLNDFSPGILACLIISVLAYGL), 45 to 67 (QAWLESLVLAILLGSITGSCFTL), 74 to 96 (GITFCAKTLLEIAIVLLGASISV), 106 to 128 (LLASIIFVIFVTLILSFTIGRLF), 135 to 157 (AMLVACGNAICGNSAIVAVAPVI), 167 to 189 (SIAFTALLGVLIILFLPFLHPFL), 196 to 218 (YGVLSGMVVYAVPQVLAATASVS), 223 to 245 (QIATVVKLVRVLMLGPLIFALSI), 257 to 275 (LHTLVPWFIIGFIFMMLIR), 285 to 307 (LIPIRFIAQLFTVISMAALGLGV), and 319 to 341 (VILASTCSILILGVCSLIMIQLN).

The protein belongs to the UPF0324 family.

It is found in the cell membrane. The chain is UPF0324 membrane protein BH02290 from Bartonella henselae (strain ATCC 49882 / DSM 28221 / CCUG 30454 / Houston 1) (Rochalimaea henselae).